A 644-amino-acid chain; its full sequence is 3D-(3,5/4)-trihydroxycyclohexane-1,2-dione hydrolase (644 aa).

A thiamine diphosphate-binding site is contributed by E65. Residues 442–522 (SLPGDLHKVW…INILLFDNAG (81 aa)) form a thiamine pyrophosphate binding region. Mg(2+) contacts are provided by D493 and N520.

Belongs to the TPP enzyme family. Mg(2+) is required as a cofactor. The cofactor is thiamine diphosphate.

The catalysed reaction is 3D-3,5/4-trihydroxycyclohexane-1,2-dione + H2O = 5-deoxy-D-glucuronate + H(+). It participates in polyol metabolism; myo-inositol degradation into acetyl-CoA; acetyl-CoA from myo-inositol: step 3/7. Its function is as follows. Involved in the cleavage of the C1-C2 bond of 3D-(3,5/4)-trihydroxycyclohexane-1,2-dione (THcHDO) to yield 5-deoxy-glucuronate (5DG). In Clostridium tetani (strain Massachusetts / E88), this protein is 3D-(3,5/4)-trihydroxycyclohexane-1,2-dione hydrolase.